The sequence spans 316 residues: Palmitoyltransferase ZDHHC3-A (316 aa).

The Cytoplasmic segment spans residues 1–45 (MRSPVPRFRDVERQASGLQPPQCLPSCHERQSSMWFIKDACGIVC). The chain crosses the membrane as a helical span at residues 46-66 (AIITWFLVFFAEFVVLFVMLI). Residues 67-70 (PSKN) lie on the Lumenal side of the membrane. The chain crosses the membrane as a helical span at residues 71–91 (LTYSLVNGTLFNSLAFLALAS). Residues 92–169 (HFRAMCTDPG…NCVGENNQKY (78 aa)) lie on the Cytoplasmic side of the membrane. One can recognise a DHHC domain in the interval 124–175 (VYKCPKCCSIKPDRAHHCSVCKRCIRKMDHHCPWVNNCVGENNQKYFVLFTM). Cys144 carries the S-palmitoyl cysteine lipid modification. Cys155 (S-palmitoyl cysteine intermediate) is an active-site residue. A helical transmembrane segment spans residues 170–190 (FVLFTMYICLISLHSLVMVVF). The Lumenal segment spans residues 191 to 212 (HFLNCFEDDWTKCSTFSPPATV). A helical membrane pass occupies residues 213–233 (ILLILLCFEGLLFLIFTSVMF). At 234–316 (GTQVHSICTD…DVIEIPLEPH (83 aa)) the chain is on the cytoplasmic side.

The protein belongs to the DHHC palmitoyltransferase family. As to quaternary structure, monomer. Homooligomers. The monomeric form has a higher catalytic activity. Forms heterooligomers with zdhhc7. In terms of processing, autopalmitoylated.

Its subcellular location is the golgi apparatus membrane. It carries out the reaction L-cysteinyl-[protein] + hexadecanoyl-CoA = S-hexadecanoyl-L-cysteinyl-[protein] + CoA. It catalyses the reaction L-cysteinyl-[protein] + tetradecanoyl-CoA = S-tetradecanoyl-L-cysteinyl-[protein] + CoA. The catalysed reaction is L-cysteinyl-[protein] + octadecanoyl-CoA = S-octadecanoyl-L-cysteinyl-[protein] + CoA. Golgi-localized palmitoyltransferase that catalyzes the addition of palmitate onto various protein substrates and regulates their association with membranes. Has no stringent fatty acid selectivity and in addition to palmitate can also transfer onto target proteins myristate from tetradecanoyl-CoA and stearate from octadecanoyl-CoA. This is Palmitoyltransferase ZDHHC3-A (zdhhc3a) from Danio rerio (Zebrafish).